The chain runs to 545 residues: Methionine--tRNA ligase (545 aa).

Positions 15–25 (PYANGPIHLGH) match the 'HIGH' region motif. Zn(2+)-binding residues include C146, C149, C159, and C162. Residues 332–336 (KMSKS) carry the 'KMSKS' region motif. ATP is bound at residue K335.

Belongs to the class-I aminoacyl-tRNA synthetase family. MetG type 1 subfamily. As to quaternary structure, monomer. It depends on Zn(2+) as a cofactor.

It is found in the cytoplasm. The catalysed reaction is tRNA(Met) + L-methionine + ATP = L-methionyl-tRNA(Met) + AMP + diphosphate. Is required not only for elongation of protein synthesis but also for the initiation of all mRNA translation through initiator tRNA(fMet) aminoacylation. In Hamiltonella defensa subsp. Acyrthosiphon pisum (strain 5AT), this protein is Methionine--tRNA ligase.